The following is a 339-amino-acid chain: Ribonucleoside-diphosphate reductase subunit beta (339 aa).

Residues D87 and H121 each contribute to the Fe cation site. Y125 is an active-site residue. Fe cation is bound at residue H215.

Belongs to the ribonucleoside diphosphate reductase small chain family. Tetramer of two alpha and two beta subunits. Requires Fe cation as cofactor.

It carries out the reaction a 2'-deoxyribonucleoside 5'-diphosphate + [thioredoxin]-disulfide + H2O = a ribonucleoside 5'-diphosphate + [thioredoxin]-dithiol. Provides the precursors necessary for DNA synthesis. Catalyzes the biosynthesis of deoxyribonucleotides from the corresponding ribonucleotides. The polypeptide is Ribonucleoside-diphosphate reductase subunit beta (nrdF) (Mycoplasma pneumoniae (strain ATCC 29342 / M129 / Subtype 1) (Mycoplasmoides pneumoniae)).